The primary structure comprises 529 residues: Protein FLOURY ENDOSPERM 6, chloroplastic (529 aa).

Disordered regions lie at residues methionine 1–threonine 22, alanine 39–arginine 77, and glutamine 166–serine 275. A chloroplast-targeting transit peptide spans methionine 1 to serine 71. Over residues proline 9–serine 18 the composition is skewed to pro residues. Over residues proline 41–arginine 57 the composition is skewed to basic residues. The stretch at valine 400–valine 452 forms a coiled coil.

Interacts with SKIPA. Interacts with ISA1. As to expression, expressed in leaves, stems and panicles. Expressed at lower levels in roots and developing seeds.

It is found in the plastid. Its subcellular location is the chloroplast. Involved in compound starch granule formation and starch synthesis in endosperm. May act as a regulatory scaffolding protein and affect starch synthesis and compound starch granule formation through direct interaction with isoamylase 1 (ISA1). Binds starch, amylopectin and amylose through its C-terminal carbohydrate-binding domain (CBM) in vitro. This Oryza sativa subsp. japonica (Rice) protein is Protein FLOURY ENDOSPERM 6, chloroplastic.